The following is a 154-amino-acid chain: 3-dehydroquinate dehydratase (154 aa).

Y26 serves as the catalytic Proton acceptor. N77, H83, and D90 together coordinate substrate. Catalysis depends on H103, which acts as the Proton donor. Residues 104-105 (IS) and R114 contribute to the substrate site.

Belongs to the type-II 3-dehydroquinase family. As to quaternary structure, homododecamer.

The catalysed reaction is 3-dehydroquinate = 3-dehydroshikimate + H2O. It functions in the pathway metabolic intermediate biosynthesis; chorismate biosynthesis; chorismate from D-erythrose 4-phosphate and phosphoenolpyruvate: step 3/7. Catalyzes a trans-dehydration via an enolate intermediate. The sequence is that of 3-dehydroquinate dehydratase from Buchnera aphidicola subsp. Baizongia pistaciae (strain Bp).